A 161-amino-acid polypeptide reads, in one-letter code: Lincosamide resistance protein (161 aa).

This chain is Lincosamide resistance protein (linA), found in Staphylococcus haemolyticus.